A 181-amino-acid chain; its full sequence is Ras-like protein 1 (181 aa).

10–17 (GAGGVGKS) contributes to the GTP binding site. Residues 32 to 40 (YDPTIEDSY) carry the Effector region motif. GTP contacts are provided by residues 57-61 (DTAGQ) and 116-119 (NKCD). At C178 the chain carries Cysteine methyl ester. C178 carries S-geranylgeranyl cysteine lipidation. Residues 179-181 (KML) constitute a propeptide, removed in mature form.

The protein belongs to the small GTPase superfamily. Ras family.

The protein localises to the cell membrane. The enzyme catalyses GTP + H2O = GDP + phosphate + H(+). With respect to regulation, alternates between an inactive form bound to GDP and an active form bound to GTP. Activated by a guanine nucleotide-exchange factor (GEF) and inactivated by a GTPase-activating protein (GAP). Functionally, ras proteins bind GDP/GTP and possess intrinsic GTPase activity. Plays a role in eye development by regulating cell growth, survival of postmitotic ommatidial cells and differentiation of photoreceptor cells. During larval development, mediates Ptth/tor signaling leading to the production of ecdysone, a hormone required for the initiation of metamorphosis. The protein is Ras-like protein 1 of Drosophila mojavensis (Fruit fly).